A 637-amino-acid chain; its full sequence is Threonine--tRNA ligase (637 aa).

The TGS domain occupies 1–61 (MLNITLPDGS…VEDSAVQIIT (61 aa)). Residues 242 to 533 (DHRKLGKQLD…LIENHAGSFP (292 aa)) form a catalytic region. Cysteine 333, histidine 384, and histidine 510 together coordinate Zn(2+).

Belongs to the class-II aminoacyl-tRNA synthetase family. Homodimer. It depends on Zn(2+) as a cofactor.

It is found in the cytoplasm. The catalysed reaction is tRNA(Thr) + L-threonine + ATP = L-threonyl-tRNA(Thr) + AMP + diphosphate + H(+). Catalyzes the attachment of threonine to tRNA(Thr) in a two-step reaction: L-threonine is first activated by ATP to form Thr-AMP and then transferred to the acceptor end of tRNA(Thr). Also edits incorrectly charged L-seryl-tRNA(Thr). This is Threonine--tRNA ligase from Neisseria meningitidis serogroup A / serotype 4A (strain DSM 15465 / Z2491).